We begin with the raw amino-acid sequence, 550 residues long: Hydroxylamine reductase (550 aa).

4 residues coordinate [2Fe-2S] cluster: Cys3, Cys6, Cys18, and Cys25. The hybrid [4Fe-2O-2S] cluster site is built by His249, Glu273, Cys317, Cys405, Cys433, Cys458, Glu492, and Lys494. Residue Cys405 is modified to Cysteine persulfide.

It belongs to the HCP family. [2Fe-2S] cluster is required as a cofactor. The cofactor is hybrid [4Fe-2O-2S] cluster.

Its subcellular location is the cytoplasm. The enzyme catalyses A + NH4(+) + H2O = hydroxylamine + AH2 + H(+). Its function is as follows. Catalyzes the reduction of hydroxylamine to form NH(3) and H(2)O. This is Hydroxylamine reductase from Salmonella gallinarum (strain 287/91 / NCTC 13346).